A 728-amino-acid chain; its full sequence is Dynamin-like protein 1 (728 aa).

Residues M1 to D119 are assembly domain, required for tetramerization. A Dynamin-type G domain is found at Q159–A442. Residues G169 to S176 form a G1 motif region. M171–S177 contributes to the GDP binding site. Positions E195 to T196 are G2 motif. Positions D298–G301 are G3 motif. Residues T358 to D361 form a G4 motif region. Residue K359 coordinates GDP. Position 388 (E388) is a region of interest, G5 motif. Position 400 to 402 (S400 to K402) interacts with GDP. Residues E470–S695 form a required for liposome binding but not for tetramerization region.

The protein belongs to the TRAFAC class dynamin-like GTPase superfamily. Dynamin/Fzo/YdjA family. In terms of assembly, forms a 2:2 heterotetramer with DLP1. DLP2 forms a central back-to-back dimer flanked on each side by a DLP1 subunit. In the crystal structures the 2 DLP1 subunits are in very different conformations.

The protein resides in the cytoplasm. It is found in the cytosol. The enzyme catalyses GTP + H2O = GDP + phosphate + H(+). The heterotetrameric DLP1(2)-DLP2(2) complex tethers liposomes and may mediate their fusion. Initial binding is probably mediated by DLP1, while DLP2 couples DLP1 subunits and increases the effective reach of the complex up to 45 nm. The role of the nucleotide is unknown. This subunit alone weakly binds to liposomes; GTP, GDP, GMPPCP and GMPPNP do not change heterotetramer binding. Tetramerization is required for GTPase activity, suggesting the GTPase domains (dynamin-type G) from DLP1 and DLP2 must dimerize to reconstitute the GTPase active site. The chain is Dynamin-like protein 1 from Campylobacter jejuni subsp. jejuni serotype O:23/36 (strain 81-176).